The chain runs to 236 residues: Small ribosomal subunit protein uS2c (236 aa).

It belongs to the universal ribosomal protein uS2 family.

Its subcellular location is the plastid. It is found in the chloroplast. The chain is Small ribosomal subunit protein uS2c (rps2) from Helianthus annuus (Common sunflower).